We begin with the raw amino-acid sequence, 155 residues long: Sweet protein mabinlin-2 (155 aa).

An N-terminal signal peptide occupies residues 1 to 20 (MAKLIFLFATLALFVLLANA). Positions 21–35 (SIQTTVIEVDEEEDN) are excised as a propeptide. Gln-36 is subject to Pyrrolidone carboxylic acid. Cystine bridges form between Cys-40–Cys-103, Cys-53–Cys-92, Cys-93–Cys-141, and Cys-105–Cys-149. The segment at 64–86 (GGQPDELEDEVEDDNDDENQPRR) is disordered. Over residues 68–81 (DELEDEVEDDNDDE) the composition is skewed to acidic residues. Positions 69–82 (ELEDEVEDDNDDEN) are excised as a propeptide. Position 83 is a pyrrolidone carboxylic acid (Gln-83). Pro-155 is a propeptide.

It belongs to the 2S seed storage albumins family. In terms of assembly, heterodimer of a small A and a large B chain linked by disulfide bonds.

Its function is as follows. Heat stable 2S seed storage protein having sweetness-inducing activity. The protein is Sweet protein mabinlin-2 of Capparis masaikai (Mabinlang).